The primary structure comprises 515 residues: 2-isopropylmalate synthase (515 aa).

The Pyruvate carboxyltransferase domain maps to 5–268 (LIIFDTTLRD…DLGIDTTQIV (264 aa)). Mn(2+)-binding residues include Asp14, His202, His204, and Asn239. The segment at 396-515 (KFVSLAQRSE…NADKLNPQRA (120 aa)) is regulatory domain.

This sequence belongs to the alpha-IPM synthase/homocitrate synthase family. LeuA type 1 subfamily. Homodimer. It depends on Mn(2+) as a cofactor.

It localises to the cytoplasm. The enzyme catalyses 3-methyl-2-oxobutanoate + acetyl-CoA + H2O = (2S)-2-isopropylmalate + CoA + H(+). It participates in amino-acid biosynthesis; L-leucine biosynthesis; L-leucine from 3-methyl-2-oxobutanoate: step 1/4. Its function is as follows. Catalyzes the condensation of the acetyl group of acetyl-CoA with 3-methyl-2-oxobutanoate (2-ketoisovalerate) to form 3-carboxy-3-hydroxy-4-methylpentanoate (2-isopropylmalate). The polypeptide is 2-isopropylmalate synthase (Burkholderia pseudomallei (strain 1106a)).